Here is a 293-residue protein sequence, read N- to C-terminus: MQLIDGKAISELVKQEIAAEVAGIVAKGGKRPHLAAILVGHDGGSETYVAAKVKACEVCGFKSSLIRYEADVTEEELLAKVRELNEDADVDGFIVQLPLPKHISEQKVIETIDYRKDVDGFHPINVGRMSIGLPCYVSATPNGILELLKRYHIETQGKKCVVLGRSNIVGKPMASLMMQKAYPGDATVTVCHSRSKDLVKECQEADIIIAALGQPNFVKAEMVKEGAVVIDVGTTRVPDATKKSGFKLTGDVKFDEVAPKCSYITPVPGGVGPMTIVSLMKNTLLAGKKAIYK.

NADP(+)-binding positions include glycine 164–serine 166, serine 193, and threonine 234.

This sequence belongs to the tetrahydrofolate dehydrogenase/cyclohydrolase family. In terms of assembly, homodimer.

It catalyses the reaction (6R)-5,10-methylene-5,6,7,8-tetrahydrofolate + NADP(+) = (6R)-5,10-methenyltetrahydrofolate + NADPH. The enzyme catalyses (6R)-5,10-methenyltetrahydrofolate + H2O = (6R)-10-formyltetrahydrofolate + H(+). It functions in the pathway one-carbon metabolism; tetrahydrofolate interconversion. Its function is as follows. Catalyzes the oxidation of 5,10-methylenetetrahydrofolate to 5,10-methenyltetrahydrofolate and then the hydrolysis of 5,10-methenyltetrahydrofolate to 10-formyltetrahydrofolate. The protein is Bifunctional protein FolD of Phocaeicola vulgatus (strain ATCC 8482 / DSM 1447 / JCM 5826 / CCUG 4940 / NBRC 14291 / NCTC 11154) (Bacteroides vulgatus).